Here is a 189-residue protein sequence, read N- to C-terminus: Ribosome-recycling factor (189 aa).

Belongs to the RRF family.

It localises to the cytoplasm. Functionally, responsible for the release of ribosomes from messenger RNA at the termination of protein biosynthesis. May increase the efficiency of translation by recycling ribosomes from one round of translation to another. The sequence is that of Ribosome-recycling factor from Salinibacter ruber (strain DSM 13855 / M31).